We begin with the raw amino-acid sequence, 337 residues long: Holliday junction branch migration complex subunit RuvB (337 aa).

The segment at 4 to 184 (QDRIISAELK…FGIVQRLEFY (181 aa)) is large ATPase domain (RuvB-L). Residues Ile-23, Arg-24, Gly-65, Lys-68, Thr-69, Thr-70, 131-133 (EDY), Arg-174, Tyr-184, and Arg-221 contribute to the ATP site. Thr-69 contributes to the Mg(2+) binding site. Positions 185-255 (DVESLTTIVA…VAQRALDMLS (71 aa)) are small ATPAse domain (RuvB-S). The interval 258-337 (SQGFDHLDRR…FNYQLPSDFK (80 aa)) is head domain (RuvB-H). 2 residues coordinate DNA: Arg-313 and Arg-318.

This sequence belongs to the RuvB family. In terms of assembly, homohexamer. Forms an RuvA(8)-RuvB(12)-Holliday junction (HJ) complex. HJ DNA is sandwiched between 2 RuvA tetramers; dsDNA enters through RuvA and exits via RuvB. An RuvB hexamer assembles on each DNA strand where it exits the tetramer. Each RuvB hexamer is contacted by two RuvA subunits (via domain III) on 2 adjacent RuvB subunits; this complex drives branch migration. In the full resolvosome a probable DNA-RuvA(4)-RuvB(12)-RuvC(2) complex forms which resolves the HJ.

It is found in the cytoplasm. The catalysed reaction is ATP + H2O = ADP + phosphate + H(+). The RuvA-RuvB-RuvC complex processes Holliday junction (HJ) DNA during genetic recombination and DNA repair, while the RuvA-RuvB complex plays an important role in the rescue of blocked DNA replication forks via replication fork reversal (RFR). RuvA specifically binds to HJ cruciform DNA, conferring on it an open structure. The RuvB hexamer acts as an ATP-dependent pump, pulling dsDNA into and through the RuvAB complex. RuvB forms 2 homohexamers on either side of HJ DNA bound by 1 or 2 RuvA tetramers; 4 subunits per hexamer contact DNA at a time. Coordinated motions by a converter formed by DNA-disengaged RuvB subunits stimulates ATP hydrolysis and nucleotide exchange. Immobilization of the converter enables RuvB to convert the ATP-contained energy into a lever motion, pulling 2 nucleotides of DNA out of the RuvA tetramer per ATP hydrolyzed, thus driving DNA branch migration. The RuvB motors rotate together with the DNA substrate, which together with the progressing nucleotide cycle form the mechanistic basis for DNA recombination by continuous HJ branch migration. Branch migration allows RuvC to scan DNA until it finds its consensus sequence, where it cleaves and resolves cruciform DNA. This is Holliday junction branch migration complex subunit RuvB from Marinomonas sp. (strain MWYL1).